The sequence spans 138 residues: Eukaryotic translation initiation factor 1A (138 aa).

Positions 1–15 (MPKNKGKGGKNRRRG) are enriched in basic residues. The interval 1–28 (MPKNKGKGGKNRRRGKNENENEKRELTY) is disordered. A compositionally biased stretch (basic and acidic residues) spans 16 to 27 (KNENENEKRELT). Residues 22-96 (EKRELTYAEE…EKGDVILKYT (75 aa)) form the S1-like domain.

This sequence belongs to the eIF-1A family.

Seems to be required for maximal rate of protein biosynthesis. Enhances ribosome dissociation into subunits and stabilizes the binding of the initiator Met-tRNA(I) to 40 S ribosomal subunits. In Schizosaccharomyces pombe (strain 972 / ATCC 24843) (Fission yeast), this protein is Eukaryotic translation initiation factor 1A (tif11).